Reading from the N-terminus, the 131-residue chain is C-type natriuretic peptide 1 (131 aa).

The signal sequence occupies residues 1 to 22 (MLYPALLCAALLLIAPLGHTEG). The propeptide occupies 23-109 (RTLHPSPDAI…KRAVMDRSRR (87 aa)). A disulfide bridge connects residues C115 and C131.

This sequence belongs to the natriuretic peptide family. In terms of tissue distribution, expressed in brain and to a low extent in atrium.

It localises to the secreted. Exhibits natriuretic and vasodepressant activity. Has a cGMP-stimulating activity. The sequence is that of C-type natriuretic peptide 1 from Oncorhynchus mykiss (Rainbow trout).